The sequence spans 514 residues: ATP synthase subunit alpha (514 aa).

170–177 (GDRQIGKT) provides a ligand contact to ATP.

It belongs to the ATPase alpha/beta chains family. F-type ATPases have 2 components, CF(1) - the catalytic core - and CF(0) - the membrane proton channel. CF(1) has five subunits: alpha(3), beta(3), gamma(1), delta(1), epsilon(1). CF(0) has three main subunits: a(1), b(2) and c(9-12). The alpha and beta chains form an alternating ring which encloses part of the gamma chain. CF(1) is attached to CF(0) by a central stalk formed by the gamma and epsilon chains, while a peripheral stalk is formed by the delta and b chains.

The protein localises to the cell inner membrane. The enzyme catalyses ATP + H2O + 4 H(+)(in) = ADP + phosphate + 5 H(+)(out). Produces ATP from ADP in the presence of a proton gradient across the membrane. The alpha chain is a regulatory subunit. The sequence is that of ATP synthase subunit alpha from Pseudomonas putida (strain GB-1).